We begin with the raw amino-acid sequence, 243 residues long: Probable enoyl-CoA hydratase echA6 (243 aa).

Belongs to the enoyl-CoA hydratase/isomerase family.

The catalysed reaction is a (3S)-3-hydroxyacyl-CoA = a (2E)-enoyl-CoA + H2O. It catalyses the reaction a 4-saturated-(3S)-3-hydroxyacyl-CoA = a (3E)-enoyl-CoA + H2O. Functionally, could possibly oxidize fatty acids using specific components. The polypeptide is Probable enoyl-CoA hydratase echA6 (echA6) (Mycobacterium bovis (strain ATCC BAA-935 / AF2122/97)).